The following is a 401-amino-acid chain: Probable trafficking protein particle complex subunit 13 homolog (401 aa).

The protein belongs to the TRAPPC13 family.

This Caenorhabditis briggsae protein is Probable trafficking protein particle complex subunit 13 homolog.